Here is a 414-residue protein sequence, read N- to C-terminus: Succinylornithine transaminase (414 aa).

At lysine 260 the chain carries N6-(pyridoxal phosphate)lysine.

It belongs to the class-III pyridoxal-phosphate-dependent aminotransferase family. AstC subfamily. Pyridoxal 5'-phosphate serves as cofactor.

The catalysed reaction is N(2)-succinyl-L-ornithine + 2-oxoglutarate = N-succinyl-L-glutamate 5-semialdehyde + L-glutamate. It functions in the pathway amino-acid degradation; L-arginine degradation via AST pathway; L-glutamate and succinate from L-arginine: step 3/5. In terms of biological role, catalyzes the transamination of N(2)-succinylornithine and alpha-ketoglutarate into N(2)-succinylglutamate semialdehyde and glutamate. Can also act as an acetylornithine aminotransferase. The sequence is that of Succinylornithine transaminase from Yersinia pseudotuberculosis serotype O:1b (strain IP 31758).